Reading from the N-terminus, the 581-residue chain is Multicopper oxidase LPR1 (581 aa).

Positions 1 to 28 are cleaved as a signal peptide; sequence MESLLCRRRIKRVMVLIIALTWLRSTCG. Cu cation contacts are provided by histidine 148, histidine 150, histidine 196, and histidine 198. Residues asparagine 254, asparagine 298, asparagine 386, and asparagine 458 are each glycosylated (N-linked (GlcNAc...) asparagine). Positions 283 to 352 constitute a Plastocyanin-like domain; sequence PRLNVRRRKY…DVVVDFYKSP (70 aa). Residues histidine 464, histidine 467, and histidine 469 each contribute to the Cu cation site. Asparagine 546 carries N-linked (GlcNAc...) asparagine glycosylation. Histidine 562, cysteine 563, histidine 564, histidine 568, and methionine 573 together coordinate Cu cation.

It belongs to the multicopper oxidase family. Cu cation is required as a cofactor.

The protein resides in the endoplasmic reticulum membrane. Functionally, multicopper oxidase that may be involved in copper homeostasis and oxidative stress response, and that is necessary for root growth inhibition by low phosphate conditions. Functions together with LPR2 and PDR2 in a common pathway that adjusts root meristem activity to phosphate availability. Oxidizes the substrate 2,2'-azinobis-(3-ethylbenzthiazoline-6-sulphonate) in vitro. The sequence is that of Multicopper oxidase LPR1 (LPR1) from Arabidopsis thaliana (Mouse-ear cress).